Consider the following 712-residue polypeptide: Nucleolin (712 aa).

The tract at residues 1–305 is disordered; the sequence is MVKLAKAGKN…KKQKVEGTEP (305 aa). 3 positions are modified to N6-acetyllysine: K9, K15, and K16. Residues 24–43 show a composition bias toward acidic residues; sequence VEEDSEDEEMSEDEEDDSSG. Phosphoserine is present on residues S28, S34, S41, and S42. A compositionally biased stretch (low complexity) spans 56–107; it reads AAATSAKKVVVSPTKKVAVATPAKKAAVTPGKKAAATPAKKTVTPAKAVTTP. The stretch at 58–65 is repeat 1; sequence ATSAKKVV. An 8 X 8 AA tandem repeats of X-T-P-X-K-K-X-X region spans residues 58–135; that stretch reads ATSAKKVVVS…GAAIPAKGAK (78 aa). S67 carries the phosphoserine modification. Phosphothreonine occurs at positions 69, 76, 84, and 92. Tandem repeats lie at residues 75–82, 83–90, and 91–98. K96 carries the post-translational modification N6-acetyllysine. Phosphothreonine is present on T99. One copy of the 5; truncated repeat lies at 99 to 104; it reads TPAKAV. K102 is modified (N6-acetyllysine). Repeat 6 spans residues 105 to 112; sequence TTPGKKGA. T106 is modified (phosphothreonine). N6-acetyllysine is present on K109. Position 113 is a phosphothreonine (T113). The residue at position 116 (K116) is an N6-acetyllysine. 2 consecutive repeat copies span residues 120-127 and 128-135. The residue at position 121 (T121) is a Phosphothreonine. Low complexity predominate over residues 122 to 137; sequence PGKKGAAIPAKGAKNG. K124 is modified (N6-acetyllysine). Phosphoserine is present on residues S145 and S153. Residues 145 to 171 show a composition bias toward acidic residues; sequence SDEEEEDDSEEDEDDDEDEDEDEDEIE. The span at 172-183 shows a compositional bias: low complexity; sequence PAAMKAAAAAPA. 2 positions are modified to phosphoserine: S184 and S206. Residues 184-211 are compositionally biased toward acidic residues; sequence SEDEDDEDDEDDEDEDDDEEDDSEEEAM. Residue T214 is modified to Phosphothreonine. The segment covering 234–274 has biased composition (acidic residues); it reads EDEDEEEDDEDEDDDDDDDDDDEDDEDEDDEEEEEEEEEEP. Residues 275 to 302 are compositionally biased toward basic and acidic residues; that stretch reads VKEAPGKRKKEMAKQKAAPEAKKQKVEG. K299 participates in a covalent cross-link: Glycyl lysine isopeptide (Lys-Gly) (interchain with G-Cter in SUMO1); alternate. K299 participates in a covalent cross-link: Glycyl lysine isopeptide (Lys-Gly) (interchain with G-Cter in SUMO2); alternate. Phosphothreonine is present on T303. 2 consecutive RRM domains span residues 309–385 and 395–468; these read FNLF…KPKG and RTLL…YTGE. At K320 the chain carries N6-acetyllysine. Residue K326 forms a Glycyl lysine isopeptide (Lys-Gly) (interchain with G-Cter in SUMO1); alternate linkage. K326 participates in a covalent cross-link: Glycyl lysine isopeptide (Lys-Gly) (interchain with G-Cter in SUMO2); alternate. At K350 the chain carries N6-acetyllysine. Phosphoserine is present on S358. A Phosphothreonine modification is found at T369. Residue K372 forms a Glycyl lysine isopeptide (Lys-Gly) (interchain with G-Cter in SUMO2) linkage. K379 participates in a covalent cross-link: Glycyl lysine isopeptide (Lys-Gly) (interchain with G-Cter in SUMO2); alternate. K379 is subject to N6-acetyllysine; alternate. N6-acetyllysine occurs at positions 400 and 405. T407 carries the phosphothreonine modification. N6-acetyllysine occurs at positions 429 and 446. S460 and S462 each carry phosphoserine. N6-acetyllysine is present on residues K469 and K479. The RRM 3 domain occupies 488 to 562; sequence KTLVLSNLSY…RAIRLELQGP (75 aa). A Glycyl lysine isopeptide (Lys-Gly) (interchain with G-Cter in SUMO2); alternate cross-link involves residue K515. K515 carries the N6-acetyllysine; alternate modification. K523 is modified (N6-acetyllysine). A Phosphoserine modification is found at S565. The residue at position 574 (K574) is an N6-acetyllysine. In terms of domain architecture, RRM 4 spans 574–649; the sequence is KTLFVKGLSE…NKVTLDWAKP (76 aa). A Glycyl lysine isopeptide (Lys-Gly) (interchain with G-Cter in SUMO2); alternate cross-link involves residue K579. The residue at position 579 (K579) is an N6-acetyllysine; alternate. S582 is subject to Phosphoserine. K591 is covalently cross-linked (Glycyl lysine isopeptide (Lys-Gly) (interchain with G-Cter in SUMO1); alternate). K591 participates in a covalent cross-link: Glycyl lysine isopeptide (Lys-Gly) (interchain with G-Cter in SUMO2); alternate. S593 and S621 each carry phosphoserine. Residue K626 forms a Glycyl lysine isopeptide (Lys-Gly) (interchain with G-Cter in SUMO2) linkage. A disordered region spans residues 642–712; the sequence is VTLDWAKPKG…KPQGKKTKFE (71 aa). K648 carries the post-translational modification N6-acetyllysine. The span at 652–698 shows a compositional bias: gly residues; it reads EGGFGGRGGGRGGFGGRGGGRGGRGGFGGRGRGGFGGRGGFRGGRGG. An asymmetric dimethylarginine mark is found at R658, R662, R668, R672, R675, R681, R683, R689, and R693. R696 is subject to Asymmetric dimethylarginine; alternate. An Omega-N-methylarginine; alternate modification is found at R696. Basic and acidic residues predominate over residues 699-712; sequence GGDHKPQGKKTKFE.

In terms of assembly, identified in a IGF2BP1-dependent mRNP granule complex containing untranslated mRNAs. Component of the SWAP complex that consists of NPM1, NCL/nucleolin, PARP1 and SWAP70. Component of a complex which is at least composed of HTATSF1/Tat-SF1, the P-TEFb complex components CDK9 and CCNT1, RNA polymerase II, SUPT5H, and NCL/nucleolin. Interacts with AICDA. Interacts with APTX. Interacts with C1QBP. Interacts with ERBB4. Interacts (via C-terminus) with FMR1 isoform 6 (via N-terminus). Interacts with GZF1; this interaction is important for nucleolar localization of GZF1. Interacts with NSUN2. Interacts with NVL. Interacts (via N-terminus domain) with SETX. Interacts (via RRM1 and C-terminal RRM4/Arg/Gly-rich domains) with TERT; the interaction is important for nucleolar localization of TERT. Interacts with WDR46. Interacts with ZFP36. Interacts with LRRC34. Interacts with RRP1B. Interacts with HNRNPU; this interaction occurs during mitosis. Interacts with RIOK1; RIOK1 recruits NCL to the PRMT5 for symmetrically methylation. Interacts with ZBTB7B. Interacts with MDK; this interaction promotes NCL clustering and lateral movements of this complex into lipid rafts leading to MDK internalization. Interacts with HDGF. Interacts with ALKBH2. Interacts with IGFBP5; this interaction is necessary for IGFBP5 localization to the nucleus. Interacts with DDX24 (when ubiquitinated); this interaction may be important during ribosome biogenesis. Post-translationally, some glutamate residues are glycylated by TTLL8. This modification occurs exclusively on glutamate residues and results in a glycine chain on the gamma-carboxyl group. In terms of processing, symmetrically methylated by PRMT5.

It is found in the nucleus. It localises to the nucleolus. The protein localises to the cytoplasm. Its function is as follows. Nucleolin is the major nucleolar protein of growing eukaryotic cells. It is found associated with intranucleolar chromatin and pre-ribosomal particles. It induces chromatin decondensation by binding to histone H1. It is thought to play a role in pre-rRNA transcription and ribosome assembly. May play a role in the process of transcriptional elongation. Binds RNA oligonucleotides with 5'-UUAGGG-3' repeats more tightly than the telomeric single-stranded DNA 5'-TTAGGG-3' repeats. The protein is Nucleolin (NCL) of Pongo abelii (Sumatran orangutan).